The sequence spans 170 residues: Protein SprT (170 aa).

A SprT-like domain is found at 22 to 163 (LQQANLTLQT…RCRRCGKTLR (142 aa)). His78 is a binding site for Zn(2+). Glu79 is an active-site residue. His82 is a binding site for Zn(2+).

Belongs to the SprT family. Zn(2+) is required as a cofactor.

It is found in the cytoplasm. The chain is Protein SprT from Pectobacterium atrosepticum (strain SCRI 1043 / ATCC BAA-672) (Erwinia carotovora subsp. atroseptica).